The following is a 428-amino-acid chain: Enolase (428 aa).

Q164 is a (2R)-2-phosphoglycerate binding site. Catalysis depends on E206, which acts as the Proton donor. D243, E286, and D313 together coordinate Mg(2+). Positions 338, 367, 368, and 389 each coordinate (2R)-2-phosphoglycerate. The active-site Proton acceptor is K338.

It belongs to the enolase family. Requires Mg(2+) as cofactor.

Its subcellular location is the cytoplasm. It localises to the secreted. It is found in the cell surface. It carries out the reaction (2R)-2-phosphoglycerate = phosphoenolpyruvate + H2O. Its pathway is carbohydrate degradation; glycolysis; pyruvate from D-glyceraldehyde 3-phosphate: step 4/5. Its function is as follows. Catalyzes the reversible conversion of 2-phosphoglycerate (2-PG) into phosphoenolpyruvate (PEP). It is essential for the degradation of carbohydrates via glycolysis. In Dehalococcoides mccartyi (strain ATCC BAA-2100 / JCM 16839 / KCTC 5957 / BAV1), this protein is Enolase.